The following is a 521-amino-acid chain: Pentatricopeptide repeat-containing protein At4g26680, mitochondrial (521 aa).

The N-terminal 38 residues, 1-38, are a transit peptide targeting the mitochondrion; that stretch reads MIRISIGVNRRLRYQFSSFAGYSGSENPRLFKTLGAAN. 10 PPR repeats span residues 167–201, 202–236, 237–271, 272–306, 307–341, 342–376, 377–411, 412–446, 447–481, and 482–516; these read TPRV…GFLP, TVES…KISP, NPYT…GFRA, TDVS…GLQP, NVVT…NVAP, NTVT…GIQR, DILT…NLVP, NSST…GCHP, NEQT…SIPL, and DSRT…KFLQ.

It belongs to the PPR family. P subfamily.

It localises to the mitochondrion. This chain is Pentatricopeptide repeat-containing protein At4g26680, mitochondrial, found in Arabidopsis thaliana (Mouse-ear cress).